A 511-amino-acid polypeptide reads, in one-letter code: Small ribosomal subunit protein uS4m (511 aa).

The 71-residue stretch at 202 to 272 (KRLDVVLYRS…IKNNLFSNIN (71 aa)) folds into the S4 RNA-binding domain.

It belongs to the universal ribosomal protein uS4 family.

The protein resides in the mitochondrion. This is Small ribosomal subunit protein uS4m (RPS4) from Prototheca wickerhamii.